Consider the following 156-residue polypeptide: Putative HTH-type transcriptional regulator YwgB (156 aa).

In terms of domain architecture, HTH rrf2-type spans 2–133 (KMKSGMEQAV…REESLQHVMD (132 aa)).

In Bacillus subtilis (strain 168), this protein is Putative HTH-type transcriptional regulator YwgB (ywgB).